A 455-amino-acid chain; its full sequence is Exodeoxyribonuclease 7 large subunit (455 aa).

It belongs to the XseA family. Heterooligomer composed of large and small subunits.

Its subcellular location is the cytoplasm. The catalysed reaction is Exonucleolytic cleavage in either 5'- to 3'- or 3'- to 5'-direction to yield nucleoside 5'-phosphates.. Bidirectionally degrades single-stranded DNA into large acid-insoluble oligonucleotides, which are then degraded further into small acid-soluble oligonucleotides. In Escherichia fergusonii (strain ATCC 35469 / DSM 13698 / CCUG 18766 / IAM 14443 / JCM 21226 / LMG 7866 / NBRC 102419 / NCTC 12128 / CDC 0568-73), this protein is Exodeoxyribonuclease 7 large subunit.